A 367-amino-acid polypeptide reads, in one-letter code: Peptide chain release factor 2 (367 aa).

Gln254 carries the post-translational modification N5-methylglutamine.

This sequence belongs to the prokaryotic/mitochondrial release factor family. In terms of processing, methylated by PrmC. Methylation increases the termination efficiency of RF2.

It is found in the cytoplasm. Its function is as follows. Peptide chain release factor 2 directs the termination of translation in response to the peptide chain termination codons UGA and UAA. In Leptospira interrogans serogroup Icterohaemorrhagiae serovar copenhageni (strain Fiocruz L1-130), this protein is Peptide chain release factor 2.